A 335-amino-acid polypeptide reads, in one-letter code: Taste receptor type 2 member 119 (335 aa).

At 1-7 (MMEGHIL) the chain is on the extracellular side. A helical membrane pass occupies residues 8 to 28 (FFFLVVMVQFVTGVLANGLIV). The Cytoplasmic portion of the chain corresponds to 29 to 43 (VVHAIDLIMWKKMAP). A helical membrane pass occupies residues 44-64 (LDLLLFCLATSRIILQLCILF). Over 65–81 (AQLCLFSLVRHTLFEDN) the chain is Extracellular. N-linked (GlcNAc...) asparagine glycosylation is present at Asn-81. The helical transmembrane segment at 82-102 (ITFVFIINELSLWFATWLGVF) threads the bilayer. Residues 103 to 124 (YCAKIATIPHPLFLWLKMRISR) are Cytoplasmic-facing. A helical transmembrane segment spans residues 125–145 (LVPWLILGSVLYVIITTFIHS). Over 146–176 (RETSAILKPIFISLFPKNATQVGTGHATLLS) the chain is Extracellular. Residue Asn-163 is glycosylated (N-linked (GlcNAc...) asparagine). The chain crosses the membrane as a helical span at residues 177 to 197 (VLVLGLTLPLFIFTVAVLLLI). The Cytoplasmic portion of the chain corresponds to 198-224 (YSLWNYSRQMRTMVGTREYSGHAHISA). The helical transmembrane segment at 225 to 245 (MLSILSFLILYLSHYMVAVLI) threads the bilayer. Residues 246-256 (STQVLYLGSRT) are Extracellular-facing. Residues 257–277 (FVFCLLVIGMYPSIHSIVLIL) traverse the membrane as a helical segment. Over 278–335 (GNPKLKRNAKMFIVHCKCCHCTRAWVTSRSPRLSDLPVPPTHPSANKTSCSEACIMPS) the chain is Cytoplasmic. The disordered stretch occupies residues 308–327 (PRLSDLPVPPTHPSANKTSC).

This sequence belongs to the G-protein coupled receptor T2R family. As to expression, expressed in subsets of taste receptor cells of the tongue and palate epithelium and exclusively in gustducin-positive cells. Expressed in the duodenum, antrum and fundus (part of the stomach).

It is found in the membrane. Its function is as follows. Gustducin-coupled receptor implicated in the perception of bitter compounds in the oral cavity and the gastrointestinal tract. Signals through PLCB2 and the calcium-regulated cation channel TRPM5. In Rattus norvegicus (Rat), this protein is Taste receptor type 2 member 119 (Tas2r119).